Reading from the N-terminus, the 366-residue chain is tRNA/tmRNA (uracil-C(5))-methyltransferase (366 aa).

S-adenosyl-L-methionine is bound by residues Gln190, Tyr218, Asn223, Glu239, and Asp299. The active-site Nucleophile is Cys324. The active-site Proton acceptor is the Glu358.

The protein belongs to the class I-like SAM-binding methyltransferase superfamily. RNA M5U methyltransferase family. TrmA subfamily.

The catalysed reaction is uridine(54) in tRNA + S-adenosyl-L-methionine = 5-methyluridine(54) in tRNA + S-adenosyl-L-homocysteine + H(+). It carries out the reaction uridine(341) in tmRNA + S-adenosyl-L-methionine = 5-methyluridine(341) in tmRNA + S-adenosyl-L-homocysteine + H(+). Its function is as follows. Dual-specificity methyltransferase that catalyzes the formation of 5-methyluridine at position 54 (m5U54) in all tRNAs, and that of position 341 (m5U341) in tmRNA (transfer-mRNA). This Salmonella paratyphi B (strain ATCC BAA-1250 / SPB7) protein is tRNA/tmRNA (uracil-C(5))-methyltransferase.